We begin with the raw amino-acid sequence, 893 residues long: Translation initiation factor IF-2 (893 aa).

The tract at residues Leu-49 to Gln-303 is disordered. Over residues Ser-68–Val-82 the composition is skewed to polar residues. Basic and acidic residues-rich tracts occupy residues Val-93–Val-159 and Asp-166–Lys-216. Basic residues predominate over residues Gly-254–Asn-269. Residues Lys-270 to Ala-283 show a composition bias toward basic and acidic residues. The region spanning Pro-392–Lys-561 is the tr-type G domain. The tract at residues Gly-401–Thr-408 is G1. Gly-401–Thr-408 contributes to the GTP binding site. Residues Gly-426–His-430 are G2. Residues Asp-447–Gly-450 form a G3 region. Residues Asp-447–His-451 and Asn-501–Asp-504 contribute to the GTP site. Residues Asn-501–Asp-504 form a G4 region. Residues Ser-537–Lys-539 form a G5 region.

The protein belongs to the TRAFAC class translation factor GTPase superfamily. Classic translation factor GTPase family. IF-2 subfamily.

The protein localises to the cytoplasm. Functionally, one of the essential components for the initiation of protein synthesis. Protects formylmethionyl-tRNA from spontaneous hydrolysis and promotes its binding to the 30S ribosomal subunits. Also involved in the hydrolysis of GTP during the formation of the 70S ribosomal complex. This chain is Translation initiation factor IF-2, found in Salmonella arizonae (strain ATCC BAA-731 / CDC346-86 / RSK2980).